Reading from the N-terminus, the 199-residue chain is MYEYLTGLVTVVAPQYIVVDVNGVGYKLLVANPYRYQEDRTKKVQVYVYQAVREDNISLFGFTDQNEKNLFMQLINVSGIGPKSALAILANPDHQGLVDAITNNNVSYLTKFPGIGKKTASQIVLDLRDKLTNESSSSLFATTQLTVDATVNRELKDALEALAALGYKERDIKKVQKALMKEEQMATDEYLRQALRLLN.

The interval 1 to 63 (MYEYLTGLVT…EDNISLFGFT (63 aa)) is domain I. The segment at 64 to 142 (DQNEKNLFMQ…NESSSSLFAT (79 aa)) is domain II. The flexible linker stretch occupies residues 143–149 (TQLTVDA). Residues 150–199 (TVNRELKDALEALAALGYKERDIKKVQKALMKEEQMATDEYLRQALRLLN) are domain III.

Belongs to the RuvA family. Homotetramer. Forms an RuvA(8)-RuvB(12)-Holliday junction (HJ) complex. HJ DNA is sandwiched between 2 RuvA tetramers; dsDNA enters through RuvA and exits via RuvB. An RuvB hexamer assembles on each DNA strand where it exits the tetramer. Each RuvB hexamer is contacted by two RuvA subunits (via domain III) on 2 adjacent RuvB subunits; this complex drives branch migration. In the full resolvosome a probable DNA-RuvA(4)-RuvB(12)-RuvC(2) complex forms which resolves the HJ.

It localises to the cytoplasm. Functionally, the RuvA-RuvB-RuvC complex processes Holliday junction (HJ) DNA during genetic recombination and DNA repair, while the RuvA-RuvB complex plays an important role in the rescue of blocked DNA replication forks via replication fork reversal (RFR). RuvA specifically binds to HJ cruciform DNA, conferring on it an open structure. The RuvB hexamer acts as an ATP-dependent pump, pulling dsDNA into and through the RuvAB complex. HJ branch migration allows RuvC to scan DNA until it finds its consensus sequence, where it cleaves and resolves the cruciform DNA. This chain is Holliday junction branch migration complex subunit RuvA, found in Limosilactobacillus reuteri subsp. reuteri (strain JCM 1112) (Lactobacillus reuteri).